A 369-amino-acid polypeptide reads, in one-letter code: P2X receptor B (369 aa).

Topologically, residues 1–25 are cytoplasmic; it reads MTIDWDSILSYNTIKVVRIRDRRLG. A helical transmembrane segment spans residues 26–46; sequence ILHLCFLIVIVLYVVVYSAII. The Lumenal segment spans residues 47 to 369; the sequence is KKGYVTTEEP…DKLYHNIEAL (323 aa). The interval 283 to 296 is pore-forming motif; that stretch reads RHAIRLIFIQTGVI.

It belongs to the P2X receptor family.

Its subcellular location is the contractile vacuole membrane. In terms of biological role, P2X receptors are ATP-gated ion channels that play a role in intracellular calcium signaling. Not required for the purinergic response to extracellular nucleotides. Not essential for osmoregulation. Inward currents are evoked by intracellular ATP and ATP analogs. Insensitive to the P2 receptor antagonists PPADS and suramin, and also copper ions. Inhibited by sodium ions. Permeable to chloride ions. The sequence is that of P2X receptor B (p2xB) from Dictyostelium discoideum (Social amoeba).